A 2596-amino-acid polypeptide reads, in one-letter code: Cadherin EGF LAG seven-pass G-type receptor fmi-1 (2596 aa).

A signal peptide spans 1–22 (MMLDRIMFLLFFILSLVIGSFS). At 23 to 2229 (EYLDDKYYST…IVRVAQMDNM (2207 aa)) the chain is on the extracellular side. Cadherin domains are found at residues 166–270 (QQEK…SPIF), 271–375 (EKDS…APVF), 376–479 (ASDS…APTL), 480–581 (IAAQ…APTF), 582–682 (DKKE…APYF), 683–784 (NDHP…SPQF), 785–892 (TSSS…APTF), and 893–1000 (EQLS…KPAL). 6 N-linked (GlcNAc...) asparagine glycosylation sites follow: Asn-381, Asn-387, Asn-562, Asn-587, Asn-765, and Asn-824. N-linked (GlcNAc...) asparagine glycans are attached at residues Asn-1030 and Asn-1263. The region spanning 1251–1287 (RIDECYRGRCSNNSTCVAFENTYQCECKPGWIGRHCE) is the EGF-like 1 domain. Cystine bridges form between Cys-1255–Cys-1266, Cys-1260–Cys-1275, Cys-1277–Cys-1286, Cys-1497–Cys-1526, Cys-1533–Cys-1546, Cys-1540–Cys-1555, Cys-1557–Cys-1567, Cys-1709–Cys-1732, Cys-1738–Cys-1750, Cys-1744–Cys-1759, Cys-1761–Cys-1770, and Cys-1780–Cys-1785. Positions 1333 to 1526 (SVSFDGEGLL…HKVGQVHEGC (194 aa)) constitute a Laminin G-like 1 domain. Residues 1529–1568 (RKDFCSTSDGQCSATSKCVNRWGGRICSCPQSVHSTGECV) form the EGF-like 2 domain. Positions 1577–1732 (RGHSLFEEES…KKKGKTRAGC (156 aa)) constitute a Laminin G-like 2 domain. EGF-like domains lie at 1734-1771 (VPNRCSVDSICPAESTCHRAWNKHKCKCHKSFVGDTCL) and 1776-1808 (VANVCSSGTCVSSNTTAGYECICPAGKTGKNCQ). N-linked (GlcNAc...) asparagine glycosylation occurs at Asn-1789. Cys-1798 and Cys-1807 are disulfide-bonded. Asn-1965, Asn-1992, Asn-2152, Asn-2195, and Asn-2228 each carry an N-linked (GlcNAc...) asparagine glycan. Positions 2054-2219 (EYSTLISKLW…TMFVNDQSSS (166 aa)) constitute a GAIN-B domain. A disulfide bridge connects residues Cys-2174 and Cys-2201. The GPS stretch occupies residues 2174 to 2219 (CVRFDEKSGTWTARGAALIGLNLTHAACEYNRIGVFTMFVNDQSSS). A helical transmembrane segment spans residues 2230–2250 (TSPAIAGVALFLCFLSILLTL). Residues 2251 to 2261 (SRRSLKTHSVR) are Cytoplasmic-facing. A helical transmembrane segment spans residues 2262–2282 (IGFILFFAINILNLFFVHKTA). At 2283–2292 (INQAYCPVRN) the chain is on the extracellular side. Residues 2293-2313 (AMLSFTSSAPFAWLFLYGLYI) form a helical membrane-spanning segment. Residues 2314-2326 (YRMLADGSSSPSL) are Cytoplasmic-facing. Residues 2327 to 2347 (TTSLLVGIVFPCLISFTTFFV) form a helical membrane-spanning segment. Topologically, residues 2348–2356 (TDQCSLSPH) are extracellular. A helical membrane pass occupies residues 2357–2377 (LWLFWCIILPIGLFLLLSFYA). Residues 2378–2401 (AATSVLVSLHKKYDVFVAKYNVKR) lie on the Cytoplasmic side of the membrane. The helical transmembrane segment at 2402-2422 (AVFQHFILTIFTLGMTLTGLF) threads the bilayer. Residues 2423-2437 (ANQLPLPMEIMEISQ) lie on the Extracellular side of the membrane. A helical transmembrane segment spans residues 2438–2458 (SIIYLIAALVIFLWCVCDITT). Over 2459-2596 (KASDSNPSMW…KNTTSTFNRE (138 aa)) the chain is Cytoplasmic.

Belongs to the G-protein coupled receptor 2 family. LN-TM7 subfamily. In terms of tissue distribution, expressed in a region of neuropil around the nerve ring and the ventral cord (at protein level). Expressed in the head, tail, ventral cord, nerve ring and neurons including HSN neurons. Expressed in DA, VA, and VB and weakly in the DB cholinergic neurons. Not expressed in ventral D-type GABAergic motorneurons.

The protein resides in the cell membrane. The protein localises to the cell projection. It localises to the axon. It is found in the dendrite. Its function is as follows. During ventral cord development, required for axon fasciculation and navigation, mediating both pioneer and follower axon extension, guidance and track formation. Acts in CEPsh glia and SubL neurons to guide follower axons into the nerve ring. Promotes motorneuron development by positively regulating the extension of the anterior neurite of ventral D-type GABAergic motorneurons along the anterior-posterior axis of the ventral nerve cord. Plays a role in synaptogenesis by regulating synaptic vesicle accumulation at GABAergic and cholinergic neuromuscular junctions. This Caenorhabditis elegans protein is Cadherin EGF LAG seven-pass G-type receptor fmi-1.